The primary structure comprises 129 residues: Small ribosomal subunit protein uS12 (129 aa).

The segment at 110-129 is disordered; that stretch reads RKQGRSRYGAHRKQVAATKK.

This sequence belongs to the universal ribosomal protein uS12 family. Part of the 30S ribosomal subunit. Contacts proteins S8 and S17. May interact with IF1 in the 30S initiation complex.

Functionally, with S4 and S5 plays an important role in translational accuracy. Interacts with and stabilizes bases of the 16S rRNA that are involved in tRNA selection in the A site and with the mRNA backbone. Located at the interface of the 30S and 50S subunits, it traverses the body of the 30S subunit contacting proteins on the other side and probably holding the rRNA structure together. The combined cluster of proteins S8, S12 and S17 appears to hold together the shoulder and platform of the 30S subunit. The protein is Small ribosomal subunit protein uS12 of Rickettsia prowazekii (strain Madrid E).